The following is an 870-amino-acid chain: Phenylalanine--tRNA ligase beta subunit (870 aa).

The tRNA-binding domain occupies 39 to 148 (AADLQKFEVA…EDAVVGEPFT (110 aa)). Positions 427 to 551 (PAKKTLDFPA…RIYGYDKIES (125 aa)) constitute a B5 domain. Residues 450-498 (LLHNEANKGEFVGNTEHSIAAYKEVREDASTGLTPKLPLEASYVKGLNI) form the RPE1 insert domain. 4 residues coordinate Mg(2+): D529, D535, E538, and E539. Positions 776–869 (SDYQANFRDY…IEQKFQGTLR (94 aa)) constitute an FDX-ACB domain.

The protein belongs to the phenylalanyl-tRNA synthetase beta subunit family. Type 1 subfamily. Tetramer of two alpha and two beta subunits. It depends on Mg(2+) as a cofactor.

It is found in the cytoplasm. It catalyses the reaction tRNA(Phe) + L-phenylalanine + ATP = L-phenylalanyl-tRNA(Phe) + AMP + diphosphate + H(+). This Rickettsia bellii (strain RML369-C) protein is Phenylalanine--tRNA ligase beta subunit (pheT).